Here is a 177-residue protein sequence, read N- to C-terminus: HVA22-like protein a (177 aa).

A run of 3 helical transmembrane segments spans residues 18-38, 47-67, and 68-88; these read VLAG…QAIE, QWLT…TFAK, and LIEW…WLVI.

The protein belongs to the DP1 family. As to expression, predominantly expressed in flower buds and stem.

The protein resides in the membrane. This is HVA22-like protein a (HVA22A) from Arabidopsis thaliana (Mouse-ear cress).